Consider the following 137-residue polypeptide: MKHVFSTSLIVSLFVIFTDAQTFQYSRGWTNGKRSSPEQTAPSRTLLPHIPLGMDKPDEECRLLIQRFLKSPCDVRLANAIVNRNKDLLRDMADDVNDGTALLYDPVPMVDTAASEDVRFKRGTPDRRLLNDGMHRL.

Positions 1–20 (MKHVFSTSLIVSLFVIFTDA) are cleaved as a signal peptide. Gln21 is modified (pyrrolidone carboxylic acid). Asn31 bears the Asparagine amide mark. Positions 68 to 137 (FLKSPCDVRL…RLLNDGMHRL (70 aa)) are excised as a propeptide.

The protein belongs to the corazonin family.

It is found in the secreted. Cardioactive peptide. Corazonin is probably involved in the physiological regulation of the heart beat. The sequence is that of Pro-corazonin from Aedes aegypti (Yellowfever mosquito).